A 115-amino-acid polypeptide reads, in one-letter code: T cell receptor beta variable 16 (115 aa).

Residues 1–20 form the signal peptide; sequence MSPIFTCITILCLLAAGSPG. In terms of domain architecture, Ig-like spans 21–115; it reads EEVAQTPKHL…SAVYFCASSQ (95 aa). The cysteines at positions 42 and 111 are disulfide-linked.

As to quaternary structure, alpha-beta TR is a heterodimer composed of an alpha and beta chain; disulfide-linked. The alpha-beta TR is associated with the transmembrane signaling CD3 coreceptor proteins to form the TR-CD3 (TcR or TCR). The assembly of alpha-beta TR heterodimers with CD3 occurs in the endoplasmic reticulum where a single alpha-beta TR heterodimer associates with one CD3D-CD3E heterodimer, one CD3G-CD3E heterodimer and one CD247 homodimer forming a stable octameric structure. CD3D-CD3E and CD3G-CD3E heterodimers preferentially associate with TR alpha and TR beta chains, respectively. The association of the CD247 homodimer is the last step of TcR assembly in the endoplasmic reticulum and is required for transport to the cell surface.

Its subcellular location is the cell membrane. Functionally, v region of the variable domain of T cell receptor (TR) beta chain that participates in the antigen recognition. Alpha-beta T cell receptors are antigen specific receptors which are essential to the immune response and are present on the cell surface of T lymphocytes. Recognize peptide-major histocompatibility (MH) (pMH) complexes that are displayed by antigen presenting cells (APC), a prerequisite for efficient T cell adaptive immunity against pathogens. Binding of alpha-beta TR to pMH complex initiates TR-CD3 clustering on the cell surface and intracellular activation of LCK that phosphorylates the ITAM motifs of CD3G, CD3D, CD3E and CD247 enabling the recruitment of ZAP70. In turn ZAP70 phosphorylates LAT, which recruits numerous signaling molecules to form the LAT signalosome. The LAT signalosome propagates signal branching to three major signaling pathways, the calcium, the mitogen-activated protein kinase (MAPK) kinase and the nuclear factor NF-kappa-B (NF-kB) pathways, leading to the mobilization of transcription factors that are critical for gene expression and essential for T cell growth and differentiation. The T cell repertoire is generated in the thymus, by V-(D)-J rearrangement. This repertoire is then shaped by intrathymic selection events to generate a peripheral T cell pool of self-MH restricted, non-autoaggressive T cells. Post-thymic interaction of alpha-beta TR with the pMH complexes shapes TR structural and functional avidity. The protein is T cell receptor beta variable 16 of Homo sapiens (Human).